An 89-amino-acid chain; its full sequence is uncharacterized protein (89 aa).

The helical transmembrane segment at 28–50 threads the bilayer; the sequence is LYLDLGFSALLFYNSNLLFSFIL.

It localises to the membrane. This is an uncharacterized protein from Archaeoglobus fulgidus (strain ATCC 49558 / DSM 4304 / JCM 9628 / NBRC 100126 / VC-16).